Consider the following 175-residue polypeptide: Nucleoside triphosphate/diphosphate phosphatase (175 aa).

R23 acts as the Proton donor in catalysis. N87, D103, D105, D107, D120, and E123 together coordinate Mg(2+).

This sequence belongs to the Ntdp family. The cofactor is Mg(2+).

The catalysed reaction is a ribonucleoside 5'-triphosphate + H2O = a ribonucleoside 5'-diphosphate + phosphate + H(+). It carries out the reaction a ribonucleoside 5'-diphosphate + H2O = a ribonucleoside 5'-phosphate + phosphate + H(+). Has nucleoside phosphatase activity towards nucleoside triphosphates and nucleoside diphosphates. This chain is Nucleoside triphosphate/diphosphate phosphatase, found in Shouchella clausii (strain KSM-K16) (Alkalihalobacillus clausii).